The chain runs to 419 residues: UPF0329 protein ECU07_1890/ECU10_0010 (419 aa).

Positions 136-165 are enriched in basic and acidic residues; it reads RQRKREEETERSVKELVGDEEKAKSKEEKA. The tract at residues 136–222 is disordered; sequence RQRKREEETE…KGGKKKSKGG (87 aa). Positions 213–222 are enriched in basic residues; that stretch reads KGGKKKSKGG.

Belongs to the UPF0329 family.

This is UPF0329 protein ECU07_1890/ECU10_0010 from Encephalitozoon cuniculi (strain GB-M1) (Microsporidian parasite).